Reading from the N-terminus, the 152-residue chain is Large-conductance mechanosensitive channel (152 aa).

Helical transmembrane passes span 21–41, 44–64, and 92–112; these read IDLA…DSLV, VVMP…NKFL, and GNFI…FWMV.

It belongs to the MscL family. As to quaternary structure, homopentamer.

It localises to the cell inner membrane. Functionally, channel that opens in response to stretch forces in the membrane lipid bilayer. May participate in the regulation of osmotic pressure changes within the cell. This Bordetella bronchiseptica (strain ATCC BAA-588 / NCTC 13252 / RB50) (Alcaligenes bronchisepticus) protein is Large-conductance mechanosensitive channel.